The sequence spans 73 residues: Translation initiation factor IF-1 (73 aa).

Residues 1 to 73 (MPKKDGAIEI…TRGRIVYRYK (73 aa)) enclose the S1-like domain.

It belongs to the IF-1 family. Component of the 30S ribosomal translation pre-initiation complex which assembles on the 30S ribosome in the order IF-2 and IF-3, IF-1 and N-formylmethionyl-tRNA(fMet); mRNA recruitment can occur at any time during PIC assembly.

The protein resides in the cytoplasm. In terms of biological role, one of the essential components for the initiation of protein synthesis. Stabilizes the binding of IF-2 and IF-3 on the 30S subunit to which N-formylmethionyl-tRNA(fMet) subsequently binds. Helps modulate mRNA selection, yielding the 30S pre-initiation complex (PIC). Upon addition of the 50S ribosomal subunit IF-1, IF-2 and IF-3 are released leaving the mature 70S translation initiation complex. In Salinispora arenicola (strain CNS-205), this protein is Translation initiation factor IF-1.